Here is a 154-residue protein sequence, read N- to C-terminus: CS6 fimbrial subunit A (154 aa).

The N-terminal stretch at 1–18 is a signal peptide; the sequence is MKKTIGLILILASFGSHA.

It localises to the fimbrium. Functionally, fimbriae (also called pili), polar filaments radiating from the surface of the bacterium to a length of 0.5-1.5 micrometers and numbering 100-300 per cell, enable bacteria to colonize the epithelium of specific host organs. In Escherichia coli, this protein is CS6 fimbrial subunit A (cssA).